A 72-amino-acid polypeptide reads, in one-letter code: Mitochondrial import protein 2 (72 aa).

The segment at Met1–Ser22 is disordered. At Met1–Gln34 the chain is on the cytoplasmic side. Residues Leu35 to Gly52 form a helical membrane-spanning segment. At Arg53–Asn72 the chain is on the mitochondrial intermembrane side.

The protein belongs to the MIM2 family. In terms of assembly, component of the mitochondrial outer import machinery (MIM) complex containing at least mim1 and mim2. Interacts with mim1. Interacts with mitophagy receptor atg43.

It is found in the mitochondrion outer membrane. Functionally, component of the mitochondrial outer import machinery (MIM) complex that mediates transport of proteins into mitochondrial compartments. Promotes the insertion of tom70 into the outer mitochondrial membrane. Promotes the insertion of atg43 into the outer mitochondrial membrane. Involved in import of the subset of proteins with multiple alpha-helical transmembrane segments. The polypeptide is Mitochondrial import protein 2 (Schizosaccharomyces pombe (strain 972 / ATCC 24843) (Fission yeast)).